We begin with the raw amino-acid sequence, 833 residues long: V-type proton ATPase 116 kDa subunit a 4 (833 aa).

Residues Met1–Glu390 are Cytoplasmic-facing. Residues Ile391 to Phe409 form a helical membrane-spanning segment. Topologically, residues Gly410 to Asp411 are vacuolar. Residues Cys412–Asn428 form a helical membrane-spanning segment. Residues Glu429–Asn443 are Cytoplasmic-facing. The chain crosses the membrane as a helical span at residues Ile444–Ser473. Topologically, residues Phe474–Ser538 are vacuolar. Residues Tyr539 to Leu558 form a helical membrane-spanning segment. The Cytoplasmic portion of the chain corresponds to Ser559–Phe576. The helical transmembrane segment at Ile577 to Lys597 threads the bilayer. Topologically, residues Trp598–Phe642 are vacuolar. A helical membrane pass occupies residues Phe643–Leu662. Residues Arg663–Thr720 lie on the Cytoplasmic side of the membrane. The disordered stretch occupies residues Val681–Lys700. A helical membrane pass occupies residues Ile721–Ala745. Over Glu746–Ala766 the chain is Vacuolar. Residues Gly767–Glu805 form a helical membrane-spanning segment. Topologically, residues Phe806–Glu833 are cytoplasmic.

This sequence belongs to the V-ATPase 116 kDa subunit family. V-ATPase is a heteromultimeric enzyme made up of two complexes: the ATP-hydrolytic V1 complex and the proton translocation V0 complex. The V1 complex consists of three catalytic AB heterodimers that form a heterohexamer, three peripheral stalks each consisting of EG heterodimers, one central rotor including subunits D and F, and the regulatory subunits C and H. The proton translocation complex V0 consists of the proton transport subunit a, a ring of proteolipid subunits c9c'', rotary subunit d, subunits e and f, and the accessory subunits ATP6AP1/Ac45 and ATP6AP2/PRR. Interacts with the V1 complex V-ATPase subunit A ATP6V1A. Interacts with the V0 complex V-ATPase subunit c ATP6V0C. In terms of tissue distribution, specifically expressed in kidney, but not in the heart, brain, spleen, lung, liver, muscle, or testis. Distribution within the kidney appears more widespread than that seen in man. High intensity staining at the surface of intercalated cells, with additional expression in the proximal tubule.

It localises to the apical cell membrane. It is found in the basolateral cell membrane. Functionally, subunit of the V0 complex of vacuolar(H+)-ATPase (V-ATPase), a multisubunit enzyme composed of a peripheral complex (V1) that hydrolyzes ATP and a membrane integral complex (V0) that translocates protons. V-ATPase is responsible for acidifying and maintaining the pH of intracellular compartments and in some cell types, is targeted to the plasma membrane, where it is responsible for acidifying the extracellular environment. Involved in normal vectorial acid transport into the urine by the kidney. This chain is V-type proton ATPase 116 kDa subunit a 4 (Atp6v0a4), found in Mus musculus (Mouse).